The sequence spans 396 residues: Flavohemoprotein (396 aa).

Residues 1–136 enclose the Globin domain; sequence MLDAQTIATV…LANVFINREA (136 aa). His-85 provides a ligand contact to heme b. Active-site charge relay system residues include Tyr-95 and Glu-135. A reductase region spans residues 147–396; that stretch reads GGWEGTRDFR…YECFGPHKVL (250 aa). An FAD-binding FR-type domain is found at 150-255; the sequence is EGTRDFRIVA…VAPAGDFFMA (106 aa). FAD contacts are provided by residues Tyr-188 and 204–207; that span reads RQYS. An NADP(+)-binding site is contributed by 268 to 273; the sequence is GVGQTP. 389 to 392 contributes to the FAD binding site; it reads CFGP.

It belongs to the globin family. Two-domain flavohemoproteins subfamily. The protein in the C-terminal section; belongs to the flavoprotein pyridine nucleotide cytochrome reductase family. Monomer. Requires FAD as cofactor. It depends on heme b as a cofactor.

Its subcellular location is the cytoplasm. The catalysed reaction is 2 nitric oxide + NADPH + 2 O2 = 2 nitrate + NADP(+) + H(+). The enzyme catalyses 2 nitric oxide + NADH + 2 O2 = 2 nitrate + NAD(+) + H(+). Functionally, is involved in NO detoxification in an aerobic process, termed nitric oxide dioxygenase (NOD) reaction that utilizes O(2) and NAD(P)H to convert NO to nitrate, which protects the bacterium from various noxious nitrogen compounds. Therefore, plays a central role in the inducible response to nitrosative stress. In terms of biological role, in the presence of oxygen and NADH, HMP has NADH oxidase activity, which leads to the generation of superoxide and H(2)O(2), both in vitro and in vivo, and it has been suggested that HMP might act as an amplifier of superoxide stress. Under anaerobic conditions, HMP also exhibits nitric oxide reductase and FAD reductase activities. However, all these reactions are much lower than NOD activity. Its function is as follows. Various electron acceptors are also reduced by HMP in vitro, including dihydropterine, ferrisiderophores, ferric citrate, cytochrome c, nitrite, S-nitrosoglutathione, and alkylhydroperoxides. However, it is unknown if these reactions are of any biological significance in vivo. The protein is Flavohemoprotein (hmp) of Escherichia coli (strain K12).